Consider the following 2443-residue polypeptide: Non-reducing polyketide synthase olcA (2443 aa).

Residues 5–442 form the Ketosynthase family 3 (KS3) domain; that stretch reads IEPIAIVGTG…GANVHAILES (438 aa). Active-site for beta-ketoacyl synthase activity residues include Cys-178, His-317, and His-362. The interval 550-885 is malonyl-CoA:ACP transacylase (MAT) domain; the sequence is GVFTGQGAQW…AAIGSLWTYL (336 aa). The For acyl/malonyl transferase activity role is filled by Ser-645. The N-terminal hotdog fold stretch occupies residues 940-1070; it reads NCLLGVLSPD…GVLTMTLGSA (131 aa). Residues 940–1231 form the PKS/mFAS DH domain; the sequence is NCLLGVLSPD…LVPLLEDLAD (292 aa). The product template (PT) domain stretch occupies residues 989 to 1497; it reads ALESAKLIAG…SLPVTISNMR (509 aa). Positions 1085-1231 are C-terminal hotdog fold; sequence MRAVDIEDFY…LVPLLEDLAD (147 aa). Residues 1771–2159 are methyltransferase (CMeT) domain; it reads NKRYLAHTHV…LERFTCALPP (389 aa). The Carrier domain occupies 2359 to 2434; the sequence is EILTSHLLTQ…EITSSAAAKL (76 aa). Ser-2394 carries the post-translational modification O-(pantetheine 4'-phosphoryl)serine.

It catalyses the reaction nicotinyl-CoA + 2 malonyl-CoA + H(+) = 4-hydroxy-6-(pyridin-3-yl)-2H-pyran-2-one + 2 CO2 + 3 CoA. The protein operates within secondary metabolite biosynthesis; terpenoid biosynthesis. Its function is as follows. Non-reducing polyketide synthase; part of the gene cluster that mediates the biosynthesis of 15-deoxyoxalicine B. The first step of the pathway is the synthesis of nicotinyl-CoA from nicotinic acid by the nicotinic acid-CoA ligase olcI. Nicotinyl-CoA is then a substrate of polyketide synthase olcA to produce 4-hydroxy-6-(3-pyridinyl)-2H-pyran-2-one (HPPO) which is further prenylated by the polyprenyl transferase olcH to yield geranylgeranyl-HPPO. Geranylgeranyl pyrophosphate is provided by the cluster-specific geranylgeranyl pyrophosphate synthase olcC. The FAD-dependent monooxygenase olcE catalyzes the epoxidation of geranylgeranyl-HPPO and the terpene cyclase olcD catalyzes the cyclization of the terpenoid component, resulting in the formation of the tricyclic terpene moiety seen in predecaturin E. The cytochrome P450 monooxygenase then catalyzes the allylic oxidation of predecaturin E, which is followed by spirocylization with concomitant loss of one molecule of water to form decaturin E. Decaturin E is the substrate of the cytochrome P450 monooxygenase olcJ which hydroxylates it at the C-29 position to form decaturin F. The short-chain dehydrogenase/reductase olcF may catalyze the oxidation of decaturin F to generate the 29-hydroxyl-27-one intermediate, and subsequent hemiacetal formation probably leads to the formation of decaturin C. The dioxygenase olcK may be a peroxisomal enzyme that catalyzes the hydroxylation of decaturin C into decaturin A once decaturin C is shuttled into the peroxisome by the MFS transporter olcL. Finally the cytochrome P450 monooxygenase olcB catalyzes the oxidative rearrangement to yield 15-deoxyoxalicine B. In the absence of olcJ, decaturin E may be shunted to a pathway in which it is oxidized to a ketone, possibly by olcF, to form decaturin D, which undergoes further allylic oxidation to yield decaturin G. Moreover, in the absence of oclK or oclL, oclB can convert decaturin C into 15-deoxyoxalicine A. The polypeptide is Non-reducing polyketide synthase olcA (Penicillium canescens).